The primary structure comprises 406 residues: Glycosyltransferase GlyE (406 aa).

A GT8 domain region spans residues Asn-3–Lys-265. UDP-binding positions include Ala-11 to Tyr-16 and Asp-106 to Ser-107. The Mn(2+) site is built by Asp-106, Asp-108, and His-227. UDP is bound at residue His-227–Lys-233.

In the N-terminal section; belongs to the glycosyltransferase 8 family. Requires Mn(2+) as cofactor.

The protein operates within protein modification; protein glycosylation. Functionally, involved in the polymorphic O-glycosylation of the serine-rich repeat protein PsrP. Catalyzes the third step in glycosylation of PsrP in this bacteria. Transfers galactose from UDP-galactose to the terminal glucose moiety of already-glycosylated PsrP (using the short substrate PsrP-GlcNAc-Glc). Has a very marked preference for PsrP substrate that has already been modified by GlcNAc and glucose. Has hydrolytic activity against UDP-galactose but none against UDP-glucose. Its function is as follows. Also catalyzes the fourth step in glycosylation of PsrP in this bacteria. Can transfer the sugar from UDP-galactose to the terminal sugar moiety of PsrP-GlcNAc-Glc-Glc and of PsrP-GlcNAc-Glc-Gal. This Streptococcus pneumoniae serotype 4 (strain ATCC BAA-334 / TIGR4) protein is Glycosyltransferase GlyE.